The chain runs to 237 residues: Concanavalin-Br (237 aa).

Residues Glu-8 and Asp-10 each contribute to the Mn(2+) site. 4 residues coordinate Ca(2+): Asp-10, Tyr-12, Asn-14, and Asp-19. Tyr-12 contributes to the a carbohydrate binding site. Residues Asp-19, His-24, and Ser-34 each coordinate Mn(2+). 99–100 is an a carbohydrate binding site; that stretch reads LY. Ca(2+) is bound at residue Asp-208. Arg-228 is a binding site for a carbohydrate.

It belongs to the leguminous lectin family. As to quaternary structure, homotetramer.

Its function is as follows. Glucose/D-mannose specific lectin. Has anti-inflammatory activity in rats. Induces histamine release in mast cells from hamster and rat. Induces lymphocyte proliferation and IFNG production. Shows toxicity against the aquatic snail B.glabrata at concentrations higher than 20 ug/ml. This chain is Concanavalin-Br, found in Canavalia brasiliensis (Brazilian jack bean).